A 1097-amino-acid chain; its full sequence is MAAAAAEQQQFYLLLGNLLSPDNVVRKQAEETYENIPGQSKITFLLQAIRNTTAAEEARQMAAVLLRRLLSSAFDEVYPALPSDVQTAIKSELLMIIQMETQSSMRKKVCDIAAELARNLIDEDGNNQWPEGLKFLFDSVSSQNVGLREAALHIFWNFPGIFGNQQQHYLDVIKRMLVQCMQDQEHPSIRTLSARATAAFILANEHNVALFKHFADLLPGFLQAVNDSCYQNDDSVLKSLVEIADTVPKYLRPHLEATLQLSLKLCGDTSLNNMQRQLALEVIVTLSETAAAMLRKHTNIVAQTIPQMLAMMVDLEEDEDWANADELEDDDFDSNAVAGESALDRMACGLGGKLVLPMIKEHIMQMLQNPDWKYRHAGLMALSAIGEGCHQQMEGILNEIVNFVLLFLQDPHPRVRYAACNAVGQMATDFAPGFQKKFHEKVIAALLQTMEDQGNQRVQAHAAAALINFTEDCPKSLLIPYLDNLVKHLHSIMVLKLQELIQKGTKLVLEQVVTSIASVADTAEEKFVPYYDLFMPSLKHIVENAVQKELRLLRGKTIECISLIGLAVGKEKFMQDASDVMQLLLKTQTDFNDMEDDDPQISYMISAWARMCKILGKEFQQYLPVVMGPLMKTASIKPEVALLDTQDMENMSDDDGWEFVNLGDQQSFGIKTAGLEEKSTACQMLVCYAKELKEGFVEYTEQVVKLMVPLLKFYFHDGVRVAAAESMPLLLECARVRGPEYLTQMWHFMCDALIKAIGTEPDSDVLSEIMHSFAKCIEVMGDGCLNNEHFEELGGILKAKLEEHFKNQELRQVKRQDEDYDEQVEESLQDEDDNDVYILTKVSDILHSIFSSYKEKVLPWFEQLLPLIVNLICPHRPWPDRQWGLCIFDDVIEHCSPASFKYAEYFLRPMLQYVCDNSPEVRQAAAYGLGVMAQYGGDNYRPFCTEALPLLVRVIQSADSKTKENVNATENCISAVGKIMKFKPDCVNVEEVLPHWLSWLPLHEDKEEAVQTFNYLCDLIESNHPIVLGPNNTNLPKIFSIIAEGEMHEAIKHEDPCAKRLANVVRQVQTSGGLWTECIAQLSPEQQAAIQELLNSA.

At alanine 2 the chain carries N-acetylalanine. 24 HEAT repeats span residues alanine 5 to glycine 38, threonine 43 to valine 77, methionine 95 to aspartate 122, proline 130 to asparagine 157, glutamine 167 to isoleucine 201, leucine 210 to threonine 246, histidine 254 to threonine 289, threonine 298 to leucine 350, glycine 352 to glycine 386, histidine 390 to phenylalanine 430, proline 432 to aspartate 472, lysine 475 to alanine 523, glutamate 525 to valine 568, lysine 570 to leucine 615, lysine 617 to leucine 692, glycine 695 to arginine 737, tyrosine 741 to methionine 780, asparagine 787 to tyrosine 853, lysine 856 to cysteine 895, alanine 903 to tyrosine 935, phenylalanine 943 to lysine 983, glutamate 990 to glutamate 1021, asparagine 1032 to glutamine 1067, and threonine 1070 to leucine 1093. Positions glutamine 28–methionine 99 constitute an Importin N-terminal domain. The interval aspartate 325–arginine 375 is ran-GTP binding. Serine 827 carries the post-translational modification Phosphoserine.

This sequence belongs to the importin beta family. Importin beta-3 subfamily. As to quaternary structure, interacts with RPS7 and RPL5. Interacts with RPL23A (via BIB domain). Interacts with H2A, H2B, H3 and H4 histones. Interacts with CPEB3; this mediates CPEB3 nuclear import following neuronal stimulation which enhances the interaction in a RAN-regulated manner. Interacts with AIFM2; this interaction likely mediates the translocation of AIFM2 into the nucleus upon oxidative stress. Interacts with STX3 (isoform 3). Interacts with SRP19. (Microbial infection) Interacts with HIV-1 Rev.

It is found in the cytoplasm. The protein localises to the nucleus. The protein resides in the nucleolus. Functionally, functions in nuclear protein import as nuclear transport receptor. Serves as receptor for nuclear localization signals (NLS) in cargo substrates. Is thought to mediate docking of the importin/substrate complex to the nuclear pore complex (NPC) through binding to nucleoporin and the complex is subsequently translocated through the pore by an energy requiring, Ran-dependent mechanism. At the nucleoplasmic side of the NPC, Ran binds to the importin, the importin/substrate complex dissociates and importin is re-exported from the nucleus to the cytoplasm where GTP hydrolysis releases Ran. The directionality of nuclear import is thought to be conferred by an asymmetric distribution of the GTP- and GDP-bound forms of Ran between the cytoplasm and nucleus. Mediates the nuclear import of ribosomal proteins RPL23A, RPS7 and RPL5. In vitro, mediates nuclear import of H2A, H2B, H3 and H4 histones. Binds to CPEB3 and mediates its nuclear import following neuronal stimulation. In case of HIV-1 infection, binds and mediates the nuclear import of HIV-1 Rev. This Homo sapiens (Human) protein is Importin-5 (IPO5).